A 154-amino-acid chain; its full sequence is Aspartate carbamoyltransferase regulatory chain (154 aa).

Cys109, Cys114, Cys138, and Cys141 together coordinate Zn(2+).

It belongs to the PyrI family. As to quaternary structure, contains catalytic and regulatory chains. The cofactor is Zn(2+).

In terms of biological role, involved in allosteric regulation of aspartate carbamoyltransferase. In Photobacterium profundum (strain SS9), this protein is Aspartate carbamoyltransferase regulatory chain.